The primary structure comprises 530 residues: MDSQKYCFKENENVTVDKACFLISNITIGPESINLQQEALQRIISTLANKNDEIQNFIDTLHHTLKGVQENSSNILSELDEEFDSLYSILDEVKESMINCIKQEQARKSQELQSQISQCNNALENSEELLEFATRSLDIKEPEEFSKAARQIKDRVTMASAFRLSLKPKVSDNMTHLMVDFSQERQMLQTLKFLPVPKAPEIDPVECLVADNSVTVAWRMPEEDNKIDHFILEHRKTNFDGLPRVKDERCWEIIDNIKGTEYTLSGLKFDSKYMNFRVRACNKAVAGEYSDPVTLETKALNFNLDNSSSHLNLKVEDTCVEWDPTGGKGQESKIKGKENKGRSGTPSPKRTSVGSRPPAVRGSRDRFTGESYTVLGDTAIESGQHYWEVKAQKDCKSYSVGVAYKTLGKFDQLGKTNTSWCIHVNNWLQNTFAAKHNNKVKALDVTVPEKIGVFCDFDGGQLSFYDANSKQLLYSFKTKFTQPVLPGFMVWCGGLSLSTGMQVPSAVRTLQKSENGMTGSASSLNNVVTQ.

Residue Met-1 is modified to N-acetylmethionine. A coiled-coil region spans residues 102 to 141 (KQEQARKSQELQSQISQCNNALENSEELLEFATRSLDIKE). One can recognise a COS domain in the interval 137–194 (LDIKEPEEFSKAARQIKDRVTMASAFRLSLKPKVSDNMTHLMVDFSQERQMLQTLKFL). A Fibronectin type-III domain is found at 196-300 (VPKAPEIDPV…DPVTLETKAL (105 aa)). The B30.2/SPRY domain occupies 300 to 506 (LNFNLDNSSS…LSTGMQVPSA (207 aa)). Positions 322–366 (WDPTGGKGQESKIKGKENKGRSGTPSPKRTSVGSRPPAVRGSRDR) are disordered. Basic and acidic residues predominate over residues 330 to 341 (QESKIKGKENKG). Positions 342-354 (RSGTPSPKRTSVG) are enriched in polar residues. Residues Ser-520 and Ser-523 each carry the phosphoserine modification.

In Homo sapiens (Human), this protein is FSD1-like protein (FSD1L).